We begin with the raw amino-acid sequence, 93 residues long: Small ribosomal subunit protein uS19 (93 aa).

It belongs to the universal ribosomal protein uS19 family.

Functionally, protein S19 forms a complex with S13 that binds strongly to the 16S ribosomal RNA. The polypeptide is Small ribosomal subunit protein uS19 (Clostridioides difficile (strain 630) (Peptoclostridium difficile)).